A 481-amino-acid chain; its full sequence is Glutamate--tRNA ligase (481 aa).

Residues 9–19 carry the 'HIGH' region motif; the sequence is PSPTGNLHIGT. Residues 247 to 251 carry the 'KMSKS' region motif; the sequence is KLSKR. An ATP-binding site is contributed by Lys250.

This sequence belongs to the class-I aminoacyl-tRNA synthetase family. Glutamate--tRNA ligase type 1 subfamily. As to quaternary structure, monomer.

It is found in the cytoplasm. It carries out the reaction tRNA(Glu) + L-glutamate + ATP = L-glutamyl-tRNA(Glu) + AMP + diphosphate. Catalyzes the attachment of glutamate to tRNA(Glu) in a two-step reaction: glutamate is first activated by ATP to form Glu-AMP and then transferred to the acceptor end of tRNA(Glu). This chain is Glutamate--tRNA ligase, found in Trichormus variabilis (strain ATCC 29413 / PCC 7937) (Anabaena variabilis).